The sequence spans 303 residues: Sulfate adenylyltransferase subunit 2 (303 aa).

Belongs to the PAPS reductase family. CysD subfamily. In terms of assembly, heterodimer composed of CysD, the smaller subunit, and CysN.

The enzyme catalyses sulfate + ATP + H(+) = adenosine 5'-phosphosulfate + diphosphate. Its pathway is sulfur metabolism; hydrogen sulfide biosynthesis; sulfite from sulfate: step 1/3. In terms of biological role, with CysN forms the ATP sulfurylase (ATPS) that catalyzes the adenylation of sulfate producing adenosine 5'-phosphosulfate (APS) and diphosphate, the first enzymatic step in sulfur assimilation pathway. APS synthesis involves the formation of a high-energy phosphoric-sulfuric acid anhydride bond driven by GTP hydrolysis by CysN coupled to ATP hydrolysis by CysD. The chain is Sulfate adenylyltransferase subunit 2 from Aliarcobacter butzleri (strain RM4018) (Arcobacter butzleri).